We begin with the raw amino-acid sequence, 676 residues long: Envelope glycoprotein (676 aa).

A signal peptide spans 1–32 (MEGLSLLQLPRDKFRKSSFFVWVIILFQKAFS). Over 33-650 (MPLGVVTNST…DDNWWTGWRQ (618 aa)) the chain is Extracellular. Residue N40 is glycosylated (N-linked (GlcNAc...) asparagine; by host). Disulfide bonds link C53–C609, C108–C135, C121–C147, C511–C556, and C601–C608. The interval 54 to 201 (KDHLASTDQL…TFLQSPPIRE (148 aa)) is receptor-binding. 7 N-linked (GlcNAc...) asparagine; by host glycosylation sites follow: N204, N208, N238, N257, N268, N296, and N314. A mucin-like region region spans residues 305–485 (ELSFETLSLN…STSNGLITST (181 aa)). The interval 313–351 (LNETEDDDATSSRTTKGRISDRATRKYSDLVPKDSPGMV) is disordered. Basic and acidic residues predominate over residues 330–344 (RISDRATRKYSDLVP). N366 carries N-linked (GlcNAc...) asparagine; by host glycosylation. Residues 406 to 458 (SSSQILSSSPTMAPSPETQTSTTYTPKLPVMTTEESTTPPRNSPGSTTEAPTL) are disordered. Composition is skewed to polar residues over residues 415–430 (PTMAPSPETQTSTTYT) and 438–458 (TEESTTPPRNSPGSTTEAPTL). N463 carries an N-linked (GlcNAc...) asparagine; by host glycan. The interval 524-539 (HNAAGIAWIPYFGPGA) is fusion peptide. A coiled-coil region spans residues 554–595 (LVCGLRQLANETTQALQLFLRATTELRTYTILNRKAIDFLLR). N-linked (GlcNAc...) asparagine; by host glycosylation is present at N563. A coiled-coil region spans residues 615–634 (WTKNITDKINQIIHDFIDNP). N618 carries an N-linked (GlcNAc...) asparagine; by host glycan. A helical transmembrane segment spans residues 651-671 (WIPAGIGITGIIIAIIALLCV). S-palmitoyl cysteine; by host attachment occurs at residues C670 and C672. The Cytoplasmic segment spans residues 672 to 676 (CKLLC).

It belongs to the filoviruses glycoprotein family. In terms of assembly, homotrimer; each monomer consists of a GP1 and a GP2 subunit linked by disulfide bonds. The resulting peplomers (GP1,2) protrude from the virus surface as spikes. Interacts with host integrin alpha-V/ITGAV. Interacts with host CLEC10A. Binds also to host CD209 and CLEC4M/DC-SIGN(R). Interacts with host FOLR1. Interacts with BST2; this interaction inhibits the antiviral effect of BST2 and this allows viral release from infected cells. Interacts with host FCN1; this interaction enhances viral entry. Interacts with host TLR4; this interaction induces cell death in T-lymphocytes or proinflammatory cytokines and SOCS1 production in monocytes. As to quaternary structure, interacts with host entry receptor NPC1. GP1 and GP2delta are part of GP1,2delta soluble complexes released by ectodomain shedding. Post-translationally, the signal peptide region modulates GP's high mannose glycosylation, thereby determining the efficiency of the interactions with DC-SIGN(R). In terms of processing, N-glycosylated. O-glycosylated in the mucin-like region. Post-translationally, palmitoylation of GP2 is not required for its function. In terms of processing, specific enzymatic cleavages in vivo yield mature proteins. The precursor is processed into GP1 and GP2 by host cell furin in the trans Golgi, and maybe by other host proteases, to yield the mature GP1 and GP2 proteins. The cleavage site corresponds to the furin optimal cleavage sequence [KR]-X-[KR]-R. This cleavage does not seem to be required for function. After the internalization of the virus into cell endosomes, GP1 C-terminus is removed by the endosomal proteases cathepsin B, cathepsin L, or both, leaving a 19-kDa N-terminal fragment which is further digested by cathepsin B. Proteolytic processing of GP1,2 by host ADAM17 can remove the transmembrane anchor of GP2 and leads to shedding of complexes consisting in GP1 and truncated GP2 (GP1,2delta).

The protein resides in the virion membrane. The protein localises to the host cell membrane. Its subcellular location is the secreted. In terms of biological role, trimeric GP1,2 complexes form the virion surface spikes and mediate the viral entry processes, with GP1 acting as the receptor-binding subunit and GP2 as the membrane fusion subunit. At later times of infection, down-regulates the expression of various host cell surface molecules that are essential for immune surveillance and cell adhesion. Down-modulates several integrins including ITGA1, ITGA2, ITGA3, ITGA4, ITGA5, ITGA6, ITGAV and ITGB1. This decrease in cell adhesion molecules may lead to cell detachment, contributing to the disruption of blood vessel integrity and hemorrhages developed during infection (cytotoxicity). Interacts with host TLR4 and thereby stimulates the differentiation and activation of monocytes leading to bystander death of T-lymphocytes. Down-regulates as well the function of host natural killer cells. Counteracts the antiviral effect of host BST2/tetherin that restricts release of progeny virions from infected cells. However, cooperates with VP40 and host BST2 to activate canonical NF-kappa-B pathway in a manner dependent on neddylation. Its function is as follows. Functions as a decoy for anti-GP1,2 antibodies thereby contributing to viral immune evasion. Interacts and activates host macrophages and dendritic cells inducing up-regulation of cytokine transcription. This effect is mediated throught activation of host TLR4. Responsible for binding to the receptor(s) on target cells. Interacts with CD209/DC-SIGN and CLEC4M/DC-SIGNR which act as cofactors for virus entry into dendritic cells (DCs) and endothelial cells. Binding to the macrophage specific lectin CLEC10A also seem to enhance virus infectivity. Interaction with FOLR1/folate receptor alpha may be a cofactor for virus entry in some cell types, although results are contradictory. Members of the Tyro3 receptor tyrosine kinase family also seem to be cell entry factors in filovirus infection. Once attached, the virions are internalized through clathrin-dependent endocytosis and/or macropinocytosis. After internalization of the virus into the endosomes of the host cell, proteolysis of GP1 by two cysteine proteases, CTSB/cathepsin B and CTSL/cathepsin L removes the glycan cap and allows GP1 binding to the host entry receptor NPC1. NPC1-binding, Ca(2+) and acidic pH induce a conformational change of GP2, which unmasks its fusion peptide and permit membranes fusion. Functionally, acts as a class I viral fusion protein. Under the current model, the protein has at least 3 conformational states: pre-fusion native state, pre-hairpin intermediate state, and post-fusion hairpin state. During viral and target cell membrane fusion, the coiled coil regions (heptad repeats) assume a trimer-of-hairpins structure, positioning the fusion peptide in close proximity to the C-terminal region of the ectodomain. The formation of this structure appears to drive apposition and subsequent fusion of viral and target cell membranes. Responsible for penetration of the virus into the cell cytoplasm by mediating the fusion of the membrane of the endocytosed virus particle with the endosomal membrane. Low pH in endosomes induces an irreversible conformational change in GP2, releasing the fusion hydrophobic peptide. The sequence is that of Envelope glycoprotein (GP) from Epomops franqueti (Franquet's epauletted fruit bat).